Consider the following 546-residue polypeptide: Medium-chain-fatty-acid--CoA ligase (546 aa).

T185 is a binding site for Mg(2+). Residues W235 and T329 each coordinate ATP. E330 provides a ligand contact to Mg(2+). ATP-binding residues include D417, K434, K438, and W443.

The protein belongs to the ATP-dependent AMP-binding enzyme family.

The protein localises to the cytoplasm. It carries out the reaction a medium-chain fatty acid + ATP + CoA = a medium-chain fatty acyl-CoA + AMP + diphosphate. It participates in lipid metabolism; fatty acid metabolism. The protein is Medium-chain-fatty-acid--CoA ligase of Ectopseudomonas oleovorans (Pseudomonas oleovorans).